A 310-amino-acid polypeptide reads, in one-letter code: ADP-L-glycero-D-manno-heptose-6-epimerase (310 aa).

NADP(+) is bound by residues 10–11 (FI), 31–32 (DN), K38, K53, 75–79 (EGACS), and N92. Y140 functions as the Proton acceptor in the catalytic mechanism. K144 contacts NADP(+). A substrate-binding site is contributed by N169. Residues V170 and K178 each contribute to the NADP(+) site. K178 (proton acceptor) is an active-site residue. Substrate is bound by residues S180, H187, 201–204 (FEGS), R209, and Y272.

This sequence belongs to the NAD(P)-dependent epimerase/dehydratase family. HldD subfamily. Homopentamer. It depends on NADP(+) as a cofactor.

It carries out the reaction ADP-D-glycero-beta-D-manno-heptose = ADP-L-glycero-beta-D-manno-heptose. It participates in nucleotide-sugar biosynthesis; ADP-L-glycero-beta-D-manno-heptose biosynthesis; ADP-L-glycero-beta-D-manno-heptose from D-glycero-beta-D-manno-heptose 7-phosphate: step 4/4. Its function is as follows. Catalyzes the interconversion between ADP-D-glycero-beta-D-manno-heptose and ADP-L-glycero-beta-D-manno-heptose via an epimerization at carbon 6 of the heptose. The sequence is that of ADP-L-glycero-D-manno-heptose-6-epimerase from Salmonella arizonae (strain ATCC BAA-731 / CDC346-86 / RSK2980).